Here is a 406-residue protein sequence, read N- to C-terminus: Argininosuccinate synthase (406 aa).

ATP contacts are provided by residues 14–22 (AYSGGLDTS) and Ala41. Residues Tyr92 and Ser97 each contribute to the L-citrulline site. Residue Gly122 participates in ATP binding. 3 residues coordinate L-aspartate: Thr124, Asn128, and Asp129. Asn128 lines the L-citrulline pocket. The L-citrulline site is built by Arg132, Ser181, Ser190, Glu266, and Tyr278.

It belongs to the argininosuccinate synthase family. Type 1 subfamily. In terms of assembly, homotetramer.

Its subcellular location is the cytoplasm. The enzyme catalyses L-citrulline + L-aspartate + ATP = 2-(N(omega)-L-arginino)succinate + AMP + diphosphate + H(+). It functions in the pathway amino-acid biosynthesis; L-arginine biosynthesis; L-arginine from L-ornithine and carbamoyl phosphate: step 2/3. The protein is Argininosuccinate synthase of Geobacter metallireducens (strain ATCC 53774 / DSM 7210 / GS-15).